The chain runs to 229 residues: MDAKIKPLRGGKPADARPEFQPAELDPSEFLAAAVQPDQPRPSRTEAEQAVKTLLAYIGENTGREGLLDTPRRVVEAYDELFQGYHQCPAEVLDRTFGETAGYDDFVLVRDIGFTSHCEHHVMPFYGKAHIAYTPVERVVGLSKLARLVEIFARRLQTQEHLTAQIAAAIDEVLKPRGVAVMIEAEHTCMSVRGIGKQGASTFTSRYTGMFRDNPAEQARFMSMIRSRG.

The interval 1–26 (MDAKIKPLRGGKPADARPEFQPAELD) is disordered. Zn(2+) contacts are provided by Cys-118, His-121, and Cys-189.

It belongs to the GTP cyclohydrolase I family. As to quaternary structure, toroid-shaped homodecamer, composed of two pentamers of five dimers.

The catalysed reaction is GTP + H2O = 7,8-dihydroneopterin 3'-triphosphate + formate + H(+). Its pathway is cofactor biosynthesis; 7,8-dihydroneopterin triphosphate biosynthesis; 7,8-dihydroneopterin triphosphate from GTP: step 1/1. This is GTP cyclohydrolase 1 from Rhodopseudomonas palustris (strain BisB5).